The following is a 357-amino-acid chain: Arginine kinase (357 aa).

In terms of domain architecture, Phosphagen kinase N-terminal spans 9–91; that stretch reads KLEAGFKKLQ…FNPIIEDYHE (83 aa). L-arginine is bound at residue 64-66; that stretch reads GVG. Residues 119-356 enclose the Phosphagen kinase C-terminal domain; that stretch reads YVVSTHVRCG…LEMIKMEEAA (238 aa). ATP contacts are provided by residues 122–126 and histidine 185; that span reads STHVR. Position 225 (glutamate 225) interacts with L-arginine. Arginine 229 provides a ligand contact to ATP. Cysteine 271 contributes to the L-arginine binding site. ATP is bound by residues 280-284 and 309-314; these read RASVH and RGTRGE.

It belongs to the ATP:guanido phosphotransferase family.

It carries out the reaction L-arginine + ATP = N(omega)-phospho-L-arginine + ADP + H(+). Functionally, catalyzes the reversible transfer of high energy ATP gamma-phosphate group to L-arginine. The polypeptide is Arginine kinase (Polybetes pythagoricus (South American huntsman spider)).